We begin with the raw amino-acid sequence, 56 residues long: Ovomucoid (56 aa).

The Kazal-like domain maps to 6-56 (VDCSEYPKPACTLEYRPLCGSDNKTYGNKCNFCNAVVESNGTLTLSHFGKC). 3 cysteine pairs are disulfide-bonded: Cys-8-Cys-38, Cys-16-Cys-35, and Cys-24-Cys-56. An N-linked (GlcNAc...) asparagine glycan is attached at Asn-45.

It is found in the secreted. This Meleagris ocellata (Ocellated turkey) protein is Ovomucoid.